Here is a 268-residue protein sequence, read N- to C-terminus: MAVGKNKGLSKGGKKGGKKKVVDPFSRKDWYDVKAPNMFQTRQIGKTLVNRTQGQRIASDYLKGRVFEVSLADLQKDIDPERSFRKFRLIAEDVQDRNVLCNFHGMDLTTDKYRSMVKKWQTLIEAIVEAKTIDGYLLRVFCIGFTAKDQQSQRKTCYAQQSQVRKIRARMTDIINNEVSGADLKQLVNKLALDSIAKDIEKSCQRIYPLHDVYIRKVKVLKKPRFDVSKLLELHGDGGGKSSDAVVSTEGAVIDRPEGYEPPVQEAV.

Disordered regions lie at residues Met-1–Val-21 and Gly-238–Val-268.

This sequence belongs to the eukaryotic ribosomal protein eS1 family. As to quaternary structure, component of the small ribosomal subunit. Mature ribosomes consist of a small (40S) and a large (60S) subunit. The 40S subunit contains about 33 different proteins and 1 molecule of RNA (18S). The 60S subunit contains about 49 different proteins and 3 molecules of RNA (28S, 5.8S and 5S).

It is found in the cytoplasm. Essential for oogenesis; required for late follicle cell development. The chain is Small ribosomal subunit protein eS1 from Drosophila ananassae (Fruit fly).